The sequence spans 407 residues: Peptidase T (407 aa).

His-78 contacts Zn(2+). Asp-80 is a catalytic residue. Asp-139 serves as a coordination point for Zn(2+). The Proton acceptor role is filled by Glu-173. The Zn(2+) site is built by Glu-174, Asp-196, and His-378.

The protein belongs to the peptidase M20B family. Requires Zn(2+) as cofactor.

The protein localises to the cytoplasm. It carries out the reaction Release of the N-terminal residue from a tripeptide.. Cleaves the N-terminal amino acid of tripeptides. This chain is Peptidase T, found in Shewanella halifaxensis (strain HAW-EB4).